The sequence spans 102 residues: Protein iss (102 aa).

Functionally, increases serum survival and confers group II surface exclusion. The sequence is that of Protein iss (iss) from Escherichia coli.